A 499-amino-acid polypeptide reads, in one-letter code: Terpentedienyl-diphosphate synthase (499 aa).

Mg(2+) is bound by residues Asp284 and Asp286. Positions Asp284–Asp287 match the DXDD motif motif.

Belongs to the terpene synthase family. Monomer. The cofactor is Mg(2+).

It carries out the reaction (2E,6E,10E)-geranylgeranyl diphosphate = terpentedienyl diphosphate. It participates in antibiotic biosynthesis. Involved in the production of the isoprenoid antibiotic terpentecin. Converts geranylgeranyl diphosphate (GGDP) into terpentedienol diphosphate (TDP) by a protonation-initiated cyclization. This chain is Terpentedienyl-diphosphate synthase (cyc1), found in Kitasatospora griseola (Streptomyces griseolosporeus).